The primary structure comprises 443 residues: Pentatricopeptide repeat-containing protein 6, mitochondrial (443 aa).

The N-terminal 13 residues, 1–13 (MRILGSLPNNIRK), are a transit peptide targeting the mitochondrion. PPR repeat units follow at residues 130 to 164 (NIVD…RIRP) and 220 to 254 (NSTT…NENS).

It is found in the mitochondrion. Its function is as follows. Mitochondrial RNA-binding protein required for the stability of the atp9 mRNA. In Schizosaccharomyces pombe (strain 972 / ATCC 24843) (Fission yeast), this protein is Pentatricopeptide repeat-containing protein 6, mitochondrial (ppr6).